The primary structure comprises 886 residues: Valine--tRNA ligase (886 aa).

Positions 53 to 63 (PNVTGSLHMGH) match the 'HIGH' region motif. Residues 540 to 544 (KMSKS) carry the 'KMSKS' region motif. Lys-543 serves as a coordination point for ATP. A coiled-coil region spans residues 820–851 (IDVAAERRRMEKDLAAAQKELASTAAKLANAD).

The protein belongs to the class-I aminoacyl-tRNA synthetase family. ValS type 1 subfamily. Monomer.

The protein resides in the cytoplasm. The enzyme catalyses tRNA(Val) + L-valine + ATP = L-valyl-tRNA(Val) + AMP + diphosphate. Catalyzes the attachment of valine to tRNA(Val). As ValRS can inadvertently accommodate and process structurally similar amino acids such as threonine, to avoid such errors, it has a 'posttransfer' editing activity that hydrolyzes mischarged Thr-tRNA(Val) in a tRNA-dependent manner. In Mycobacterium leprae (strain TN), this protein is Valine--tRNA ligase.